Consider the following 158-residue polypeptide: Small ribosomal subunit protein eS10 (158 aa).

The disordered stretch occupies residues Glu-99–Pro-158. The span at Gly-149 to Pro-158 shows a compositional bias: gly residues.

Belongs to the eukaryotic ribosomal protein eS10 family.

The protein resides in the cytoplasm. The polypeptide is Small ribosomal subunit protein eS10 (RpS10) (Spodoptera frugiperda (Fall armyworm)).